The following is a 247-amino-acid chain: Granulin (247 aa).

Belongs to the polyhedrin family.

Functionally, component of the virus occlusion bodies, which are large proteinaceous structures, that protect the virus from the outside environment for extended periods until they are ingested by insect larvae. The chain is Granulin from Agrotis segetum granulosis virus (AsGV).